Reading from the N-terminus, the 336-residue chain is Holliday junction branch migration complex subunit RuvB (336 aa).

The tract at residues 4-184 is large ATPase domain (RuvB-L); sequence ADRLVAPGSI…FGIVQRLEFY (181 aa). ATP-binding positions include Ile-23, Arg-24, Gly-65, Lys-68, Thr-69, Thr-70, 131 to 133, Arg-174, Tyr-184, and Arg-221; that span reads EDY. Thr-69 serves as a coordination point for Mg(2+). A small ATPAse domain (RuvB-S) region spans residues 185 to 255; sequence QVADLQHIVS…VASQALDMLN (71 aa). The head domain (RuvB-H) stretch occupies residues 258-336; sequence AEGFDYMDRK…HFGITPPQMP (79 aa). DNA contacts are provided by Arg-294, Arg-313, and Arg-318.

Belongs to the RuvB family. As to quaternary structure, homohexamer. Forms an RuvA(8)-RuvB(12)-Holliday junction (HJ) complex. HJ DNA is sandwiched between 2 RuvA tetramers; dsDNA enters through RuvA and exits via RuvB. An RuvB hexamer assembles on each DNA strand where it exits the tetramer. Each RuvB hexamer is contacted by two RuvA subunits (via domain III) on 2 adjacent RuvB subunits; this complex drives branch migration. In the full resolvosome a probable DNA-RuvA(4)-RuvB(12)-RuvC(2) complex forms which resolves the HJ.

It localises to the cytoplasm. The enzyme catalyses ATP + H2O = ADP + phosphate + H(+). In terms of biological role, the RuvA-RuvB-RuvC complex processes Holliday junction (HJ) DNA during genetic recombination and DNA repair, while the RuvA-RuvB complex plays an important role in the rescue of blocked DNA replication forks via replication fork reversal (RFR). RuvA specifically binds to HJ cruciform DNA, conferring on it an open structure. The RuvB hexamer acts as an ATP-dependent pump, pulling dsDNA into and through the RuvAB complex. RuvB forms 2 homohexamers on either side of HJ DNA bound by 1 or 2 RuvA tetramers; 4 subunits per hexamer contact DNA at a time. Coordinated motions by a converter formed by DNA-disengaged RuvB subunits stimulates ATP hydrolysis and nucleotide exchange. Immobilization of the converter enables RuvB to convert the ATP-contained energy into a lever motion, pulling 2 nucleotides of DNA out of the RuvA tetramer per ATP hydrolyzed, thus driving DNA branch migration. The RuvB motors rotate together with the DNA substrate, which together with the progressing nucleotide cycle form the mechanistic basis for DNA recombination by continuous HJ branch migration. Branch migration allows RuvC to scan DNA until it finds its consensus sequence, where it cleaves and resolves cruciform DNA. This Cronobacter sakazakii (strain ATCC BAA-894) (Enterobacter sakazakii) protein is Holliday junction branch migration complex subunit RuvB.